The sequence spans 203 residues: Large ribosomal subunit protein uL13 (203 aa).

The residue at position 2 (Ala-2) is an N-acetylalanine. Arg-59 is modified (citrulline). Ser-77 is modified (phosphoserine). Position 140 is a citrulline (Arg-140). Lys-191 carries the post-translational modification N6-acetyllysine.

The protein belongs to the universal ribosomal protein uL13 family. Component of the 60S ribosome. Component of the GAIT complex. Interacts with EIF4G1. Phosphorylation at Ser-77 upon interferon-gamma treatment in macrophages involves a DAPK1-DAPK3 kinase cascade and is causing release from the ribosome, association with the GAIT complex and subsequent involvement in transcript-selective translation inhibition. Post-translationally, citrullinated by PADI4.

The protein resides in the cytoplasm. Associated with ribosomes but is not required for canonical ribosome function and has extra-ribosomal functions. Component of the GAIT (gamma interferon-activated inhibitor of translation) complex which mediates interferon-gamma-induced transcript-selective translation inhibition in inflammation processes. Upon interferon-gamma activation and subsequent phosphorylation dissociates from the ribosome and assembles into the GAIT complex which binds to stem loop-containing GAIT elements in the 3'-UTR of diverse inflammatory mRNAs (such as ceruplasmin) and suppresses their translation. In the GAIT complex interacts with m7G cap-bound eIF4G at or near the eIF3-binding site and blocks the recruitment of the 43S ribosomal complex. Involved in methylation of rRNA. The sequence is that of Large ribosomal subunit protein uL13 (RPL13A) from Canis lupus familiaris (Dog).